The following is a 583-amino-acid chain: Arginine--tRNA ligase (583 aa).

Positions 121-131 (ANPTGPLHLGH) match the 'HIGH' region motif.

This sequence belongs to the class-I aminoacyl-tRNA synthetase family. In terms of assembly, monomer.

The protein resides in the cytoplasm. The catalysed reaction is tRNA(Arg) + L-arginine + ATP = L-arginyl-tRNA(Arg) + AMP + diphosphate. The polypeptide is Arginine--tRNA ligase (argS) (Aquifex aeolicus (strain VF5)).